Consider the following 357-residue polypeptide: Putative DNA directed RNA polymerase subunit R470 (357 aa).

Belongs to the archaeal Rpo11/eukaryotic RPB11/RPC19 RNA polymerase subunit family.

It localises to the virion. It carries out the reaction RNA(n) + a ribonucleoside 5'-triphosphate = RNA(n+1) + diphosphate. The sequence is that of Putative DNA directed RNA polymerase subunit R470 from Acanthamoeba polyphaga mimivirus (APMV).